The sequence spans 468 residues: Acetyl-CoA decarbonylase/synthase complex subunit gamma 1 (468 aa).

A 4Fe-4S domain is found at 1 to 61 (MKINSPLEAY…YAKKLAELDR (61 aa)). Residues C18, C21, C26, and C43 each contribute to the [4Fe-4S] cluster site.

In terms of assembly, heterodimer of delta and gamma chains. The ACDS complex is made up of alpha, epsilon, beta, gamma and delta chains with a probable stoichiometry of (alpha(2)epsilon(2))(4)-beta(8)-(gamma(1)delta(1))(8). Corrinoid serves as cofactor. It depends on [4Fe-4S] cluster as a cofactor.

It catalyses the reaction 5,6,7,8-tetrahydrosarcinapterin + methyl-Co(III)-[corrinoid Fe-S protein] = 5-methyltetrahydrosarcinapterin + Co(I)-[corrinoid Fe-S protein] + H(+). The protein operates within one-carbon metabolism; methanogenesis from acetate. Functionally, part of a complex that catalyzes the reversible cleavage of acetyl-CoA, allowing growth on acetate as sole source of carbon and energy. This is Acetyl-CoA decarbonylase/synthase complex subunit gamma 1 from Methanosarcina thermophila.